The chain runs to 260 residues: Histidine-binding periplasmic protein (260 aa).

The first 22 residues, 1–22, serve as a signal peptide directing secretion; it reads MKKLALSLSLVLAFSSATAAFA. The cysteines at positions 60 and 67 are disulfide-linked. L-histidine-binding residues include S91, S92, S94, R99, T143, and D183.

It belongs to the bacterial solute-binding protein 3 family. In terms of assembly, the complex is composed of two ATP-binding proteins (HisP), two transmembrane proteins (HisM and HisQ) and a solute-binding protein (HisJ).

The protein resides in the periplasm. In terms of biological role, part of the ABC transporter complex HisPMQJ involved in histidine transport. Binds histidine. Interacts with HisQMP and stimulates ATPase activity of HisP, which results in histidine translocation. May have some additional function(s) in translocation that is independent of the stimulation of ATP hydrolysis. This Salmonella typhimurium (strain LT2 / SGSC1412 / ATCC 700720) protein is Histidine-binding periplasmic protein.